The chain runs to 379 residues: tRNA(Met) cytidine acetate ligase (379 aa).

ATP-binding positions include 7–20, G100, N153, and R178; that span reads ITEYNPFHNGHQYH.

This sequence belongs to the TmcAL family.

Its subcellular location is the cytoplasm. The catalysed reaction is cytidine(34) in elongator tRNA(Met) + acetate + ATP = N(4)-acetylcytidine(34) in elongator tRNA(Met) + AMP + diphosphate. Functionally, catalyzes the formation of N(4)-acetylcytidine (ac(4)C) at the wobble position of elongator tRNA(Met), using acetate and ATP as substrates. First activates an acetate ion to form acetyladenylate (Ac-AMP) and then transfers the acetyl group to tRNA to form ac(4)C34. This Staphylococcus aureus (strain Mu3 / ATCC 700698) protein is tRNA(Met) cytidine acetate ligase.